The chain runs to 397 residues: Efflux pump periplasmic linker BepD (397 aa).

Residues 1-26 form the signal peptide; it reads MTLNRTIRCFAAGAAFIVFAAQPALA. The stretch at 98-139 forms a coiled coil; sequence APYQAELEKAQAQVAQAEAQYQQSIRDAERAEQLVQQKVQSA.

The protein belongs to the membrane fusion protein (MFP) (TC 8.A.1) family. In terms of assembly, probably part of a tripartite efflux pump, which is composed of an outer membrane efflux protein, an inner membrane protein and a protein that expands the periplasmic space. Could form a tripartite pump with BepC and BepE.

The protein resides in the periplasm. Its function is as follows. Involved in resistance to several unrelated toxic compounds, such as dyes, detergents and antibiotics. The protein is Efflux pump periplasmic linker BepD (bepD) of Brucella suis biovar 1 (strain 1330).